The primary structure comprises 229 residues: Large ribosomal subunit protein uL1 (229 aa).

It belongs to the universal ribosomal protein uL1 family. Part of the 50S ribosomal subunit.

Binds directly to 23S rRNA. The L1 stalk is quite mobile in the ribosome, and is involved in E site tRNA release. In terms of biological role, protein L1 is also a translational repressor protein, it controls the translation of the L11 operon by binding to its mRNA. This chain is Large ribosomal subunit protein uL1, found in Caulobacter vibrioides (strain ATCC 19089 / CIP 103742 / CB 15) (Caulobacter crescentus).